Here is a 407-residue protein sequence, read N- to C-terminus: MKPTVWHHLRLCPHGHPDETIDDAAIAVDETGTIVWLGAFSALPHGYAHWQREDLHGAWVTPGLVDCHTHLVYGGTRADEFAQRLAGVSYEEIARQGGGIVSTVRATRAADETTLFVQAAARLQPLLAEGVSAIEIKSGYGLDLASERKMLRVARQLGERFPVSVYTTFLGAHALPPEYAGRADAYIDEVCERMLPTLADEGLVDAVDVFCERIGFSLAQTERVFEAATRRGLPVKLHAEQLSNAGGTALAARYRALSADHLEFLDEAGVEAMKAAGTVAVLLPGAYYFIRETQLPPIELLRKHGVPIALATDHNPGTSPLESLLLTLNMGCTLFRMTVPEVLQGVTRHAAAALGRADRHGALEIGRQADFAVWSVGSLAELAYWIGRPLCEQVVRGGATVFRRMNG.

Fe(3+)-binding residues include H68 and H70. Zn(2+)-binding residues include H68 and H70. Residues R77, Y140, and H173 each contribute to the 4-imidazolone-5-propanoate site. Y140 contacts N-formimidoyl-L-glutamate. H238 serves as a coordination point for Fe(3+). H238 is a binding site for Zn(2+). Q241 contributes to the 4-imidazolone-5-propanoate binding site. D313 is a binding site for Fe(3+). D313 provides a ligand contact to Zn(2+). 2 residues coordinate N-formimidoyl-L-glutamate: N315 and G317. Position 318 (T318) interacts with 4-imidazolone-5-propanoate.

The protein belongs to the metallo-dependent hydrolases superfamily. HutI family. Zn(2+) serves as cofactor. The cofactor is Fe(3+).

Its subcellular location is the cytoplasm. The enzyme catalyses 4-imidazolone-5-propanoate + H2O = N-formimidoyl-L-glutamate. The protein operates within amino-acid degradation; L-histidine degradation into L-glutamate; N-formimidoyl-L-glutamate from L-histidine: step 3/3. Functionally, catalyzes the hydrolytic cleavage of the carbon-nitrogen bond in imidazolone-5-propanoate to yield N-formimidoyl-L-glutamate. It is the third step in the universal histidine degradation pathway. This is Imidazolonepropionase from Burkholderia ambifaria (strain MC40-6).